A 481-amino-acid polypeptide reads, in one-letter code: Proline--tRNA ligase (481 aa).

It belongs to the class-II aminoacyl-tRNA synthetase family. ProS type 3 subfamily. In terms of assembly, homodimer.

It is found in the cytoplasm. The catalysed reaction is tRNA(Pro) + L-proline + ATP = L-prolyl-tRNA(Pro) + AMP + diphosphate. Catalyzes the attachment of proline to tRNA(Pro) in a two-step reaction: proline is first activated by ATP to form Pro-AMP and then transferred to the acceptor end of tRNA(Pro). The chain is Proline--tRNA ligase from Chlorobium phaeobacteroides (strain BS1).